A 287-amino-acid polypeptide reads, in one-letter code: Glycine--tRNA ligase alpha subunit (287 aa).

It belongs to the class-II aminoacyl-tRNA synthetase family. Tetramer of two alpha and two beta subunits.

The protein resides in the cytoplasm. It carries out the reaction tRNA(Gly) + glycine + ATP = glycyl-tRNA(Gly) + AMP + diphosphate. The protein is Glycine--tRNA ligase alpha subunit of Campylobacter curvus (strain 525.92).